The sequence spans 180 residues: DNA-directed RNA polymerase subunit Rpo7 (180 aa).

In terms of domain architecture, S1 motif spans 82-165 (QEVVEGEVLQ…RLPRIALTMR (84 aa)).

The protein belongs to the eukaryotic RPB7/RPC8 RNA polymerase subunit family. In terms of assembly, part of the 13-subunit RNA polymerase complex. Forms a stalk with Rpo4 that extends from the main structure.

It is found in the cytoplasm. The enzyme catalyses RNA(n) + a ribonucleoside 5'-triphosphate = RNA(n+1) + diphosphate. Functionally, DNA-dependent RNA polymerase (RNAP) catalyzes the transcription of DNA into RNA using the four ribonucleoside triphosphates as substrates. The highly mobile Rpo4/Rpo7 heterodimer is conditionally required for transcription initiation. The chain is DNA-directed RNA polymerase subunit Rpo7 from Saccharolobus shibatae (strain ATCC 51178 / DSM 5389 / JCM 8931 / NBRC 15437 / B12) (Sulfolobus shibatae).